A 128-amino-acid polypeptide reads, in one-letter code: Large ribosomal subunit protein bL20 (128 aa).

This sequence belongs to the bacterial ribosomal protein bL20 family.

Binds directly to 23S ribosomal RNA and is necessary for the in vitro assembly process of the 50S ribosomal subunit. It is not involved in the protein synthesizing functions of that subunit. The protein is Large ribosomal subunit protein bL20 of Anaplasma phagocytophilum (strain HZ).